A 261-amino-acid chain; its full sequence is tRNA pseudouridine synthase A (261 aa).

Catalysis depends on Asp51, which acts as the Nucleophile. Tyr109 provides a ligand contact to substrate.

This sequence belongs to the tRNA pseudouridine synthase TruA family. In terms of assembly, homodimer.

It carries out the reaction uridine(38/39/40) in tRNA = pseudouridine(38/39/40) in tRNA. Its function is as follows. Formation of pseudouridine at positions 38, 39 and 40 in the anticodon stem and loop of transfer RNAs. The chain is tRNA pseudouridine synthase A from Shewanella sediminis (strain HAW-EB3).